A 276-amino-acid chain; its full sequence is MTTICTLLKDSQLPDSPSARLDTELLLAAAMGKPRSFLRTWPERIVPREANERFDDWIARRRNGEPVAYILGHQGFWSLDLEVAPHTLIPRPDTELLVETALATLAADTATVLDLGTGTGAIALALASERPLWTVTAVDRVEEAVALAERNRQRLLLENVEVRRSHWFSALDGRRFRMIVGNPPYIPASDPHLSEGDVRFEPKSALVAGSDGLDDIRQIVAQAPRHLLDEGWLLLEHGYDQGAAVRELLGARGFAGVHTLRDLGGNERITLGQWAC.

Residues 116-120 (GTGTG), Asp-139, Trp-167, and Asn-182 contribute to the S-adenosyl-L-methionine site. 182–185 (NPPY) provides a ligand contact to substrate.

It belongs to the protein N5-glutamine methyltransferase family. PrmC subfamily.

It carries out the reaction L-glutaminyl-[peptide chain release factor] + S-adenosyl-L-methionine = N(5)-methyl-L-glutaminyl-[peptide chain release factor] + S-adenosyl-L-homocysteine + H(+). Functionally, methylates the class 1 translation termination release factors RF1/PrfA and RF2/PrfB on the glutamine residue of the universally conserved GGQ motif. The chain is Release factor glutamine methyltransferase from Pseudomonas aeruginosa (strain ATCC 15692 / DSM 22644 / CIP 104116 / JCM 14847 / LMG 12228 / 1C / PRS 101 / PAO1).